We begin with the raw amino-acid sequence, 393 residues long: Digeranylgeranylglycerophospholipid reductase (393 aa).

FAD is bound by residues Ala13, Asp32, Cys43, Ala44, Gly46, Arg95, Val119, Asp274, and Gly286. Residues Arg327 and Gly363 each coordinate a 2,3-bis-O-(geranylgeranyl)-sn-glycerol 1-phospholipid.

The protein belongs to the geranylgeranyl reductase family. DGGGPL reductase subfamily. It depends on FAD as a cofactor.

The catalysed reaction is a 2,3-bis-O-phytanyl-sn-glycerol 1-phospholipid + 8 A = a 2,3-bis-O-(geranylgeranyl)-sn-glycerol 1-phospholipid + 8 AH2. It carries out the reaction 2,3-bis-O-(phytanyl)-sn-glycerol 1-phosphate + 8 A = 2,3-bis-O-(geranylgeranyl)-sn-glycerol 1-phosphate + 8 AH2. The enzyme catalyses CDP-2,3-bis-O-(geranylgeranyl)-sn-glycerol + 8 AH2 = CDP-2,3-bis-O-(phytanyl)-sn-glycerol + 8 A. It catalyses the reaction archaetidylserine + 8 AH2 = 2,3-bis-O-phytanyl-sn-glycero-3-phospho-L-serine + 8 A. Its pathway is membrane lipid metabolism; glycerophospholipid metabolism. In terms of biological role, is involved in the reduction of 2,3-digeranylgeranylglycerophospholipids (unsaturated archaeols) into 2,3-diphytanylglycerophospholipids (saturated archaeols) in the biosynthesis of archaeal membrane lipids. Catalyzes the formation of archaetidic acid (2,3-di-O-phytanyl-sn-glyceryl phosphate) from 2,3-di-O-geranylgeranylglyceryl phosphate (DGGGP) via the hydrogenation of each double bond of the isoprenoid chains. Is also probably able to reduce double bonds of geranyl groups in CDP-2,3-bis-O-(geranylgeranyl)-sn-glycerol and archaetidylserine, thus acting at various stages in the biosynthesis of archaeal membrane lipids. The protein is Digeranylgeranylglycerophospholipid reductase of Pyrococcus horikoshii (strain ATCC 700860 / DSM 12428 / JCM 9974 / NBRC 100139 / OT-3).